Reading from the N-terminus, the 145-residue chain is D-aminoacyl-tRNA deacylase (145 aa).

The Gly-cisPro motif, important for rejection of L-amino acids motif lies at 137–138 (GP).

The protein belongs to the DTD family. As to quaternary structure, homodimer.

The protein localises to the cytoplasm. It carries out the reaction glycyl-tRNA(Ala) + H2O = tRNA(Ala) + glycine + H(+). The enzyme catalyses a D-aminoacyl-tRNA + H2O = a tRNA + a D-alpha-amino acid + H(+). Its function is as follows. An aminoacyl-tRNA editing enzyme that deacylates mischarged D-aminoacyl-tRNAs. Also deacylates mischarged glycyl-tRNA(Ala), protecting cells against glycine mischarging by AlaRS. Acts via tRNA-based rather than protein-based catalysis; rejects L-amino acids rather than detecting D-amino acids in the active site. By recycling D-aminoacyl-tRNA to D-amino acids and free tRNA molecules, this enzyme counteracts the toxicity associated with the formation of D-aminoacyl-tRNA entities in vivo and helps enforce protein L-homochirality. In Shewanella sp. (strain MR-4), this protein is D-aminoacyl-tRNA deacylase.